A 59-amino-acid polypeptide reads, in one-letter code: uncharacterized protein (59 aa).

This is an uncharacterized protein from Chenopodium amaranticolor (Quinoa).